Here is a 191-residue protein sequence, read N- to C-terminus: uncharacterized protein (191 aa).

Helical transmembrane passes span 24–44, 51–71, 114–134, 139–159, and 167–187; these read IVRGLIDGSLSALGVVIGASG, IIAAGLGGGIANGLSNILGAF, LIDGISTTIGSALPVVPFFLF, ALYVAIGITIAILFILGVFIG, and IISGIKMVAGALAVAILCFMI.

Its subcellular location is the cell membrane. This is an uncharacterized protein from Methanocaldococcus jannaschii (strain ATCC 43067 / DSM 2661 / JAL-1 / JCM 10045 / NBRC 100440) (Methanococcus jannaschii).